We begin with the raw amino-acid sequence, 368 residues long: UDP-N-acetylglucosamine--N-acetylmuramyl-(pentapeptide) pyrophosphoryl-undecaprenol N-acetylglucosamine transferase (368 aa).

Residues 11-13 (TGG), asparagine 123, arginine 164, serine 188, isoleucine 250, and glutamine 295 each bind UDP-N-acetyl-alpha-D-glucosamine.

Belongs to the glycosyltransferase 28 family. MurG subfamily.

The protein resides in the cell inner membrane. The enzyme catalyses di-trans,octa-cis-undecaprenyl diphospho-N-acetyl-alpha-D-muramoyl-L-alanyl-D-glutamyl-meso-2,6-diaminopimeloyl-D-alanyl-D-alanine + UDP-N-acetyl-alpha-D-glucosamine = di-trans,octa-cis-undecaprenyl diphospho-[N-acetyl-alpha-D-glucosaminyl-(1-&gt;4)]-N-acetyl-alpha-D-muramoyl-L-alanyl-D-glutamyl-meso-2,6-diaminopimeloyl-D-alanyl-D-alanine + UDP + H(+). It participates in cell wall biogenesis; peptidoglycan biosynthesis. Its function is as follows. Cell wall formation. Catalyzes the transfer of a GlcNAc subunit on undecaprenyl-pyrophosphoryl-MurNAc-pentapeptide (lipid intermediate I) to form undecaprenyl-pyrophosphoryl-MurNAc-(pentapeptide)GlcNAc (lipid intermediate II). This is UDP-N-acetylglucosamine--N-acetylmuramyl-(pentapeptide) pyrophosphoryl-undecaprenol N-acetylglucosamine transferase from Solidesulfovibrio magneticus (strain ATCC 700980 / DSM 13731 / RS-1) (Desulfovibrio magneticus).